Here is a 504-residue protein sequence, read N- to C-terminus: ATP synthase subunit alpha (504 aa).

170 to 177 provides a ligand contact to ATP; the sequence is GDRQTGKT.

This sequence belongs to the ATPase alpha/beta chains family. In terms of assembly, F-type ATPases have 2 components, CF(1) - the catalytic core - and CF(0) - the membrane proton channel. CF(1) has five subunits: alpha(3), beta(3), gamma(1), delta(1), epsilon(1). CF(0) has three main subunits: a(1), b(2) and c(9-12). The alpha and beta chains form an alternating ring which encloses part of the gamma chain. CF(1) is attached to CF(0) by a central stalk formed by the gamma and epsilon chains, while a peripheral stalk is formed by the delta and b chains.

The protein resides in the cell membrane. It carries out the reaction ATP + H2O + 4 H(+)(in) = ADP + phosphate + 5 H(+)(out). In terms of biological role, produces ATP from ADP in the presence of a proton gradient across the membrane. The alpha chain is a regulatory subunit. The sequence is that of ATP synthase subunit alpha from Shouchella clausii (strain KSM-K16) (Alkalihalobacillus clausii).